Consider the following 339-residue polypeptide: 2-halobenzoate 1,2-dioxygenase electron transfer component (339 aa).

One can recognise a 2Fe-2S ferredoxin-type domain in the interval 3–96 (HSIALRFEDD…DCVVRILASS (94 aa)). [2Fe-2S] cluster contacts are provided by cysteine 40, cysteine 45, cysteine 48, and cysteine 80. Residues 98–336 (ACQVKKSTMT…NFYFEKFAPT (239 aa)) are ferredoxin-reductase. The FAD-binding FR-type domain occupies 103-203 (KSTMTGQMTE…DGPYGAFYLR (101 aa)).

This sequence belongs to the bacterial ring-hydroxylating dioxygenase ferredoxin reductase family. In terms of assembly, monomer. It is part of 2-halobenzoate dioxygenase two component enzyme system. The other component is a dioxygenase component consisting of 3 large (CbdA) subunits and 3 small (CbdB) subunits. Requires FAD as cofactor. [2Fe-2S] cluster serves as cofactor.

It catalyses the reaction 2 reduced [2Fe-2S]-[ferredoxin] + NAD(+) + H(+) = 2 oxidized [2Fe-2S]-[ferredoxin] + NADH. It participates in xenobiotic degradation; benzoate degradation via CoA ligation. In terms of biological role, electron transfer component of 2-halobenzoate 1,2-dioxygenase system. The protein is 2-halobenzoate 1,2-dioxygenase electron transfer component (cbdC) of Burkholderia cepacia (Pseudomonas cepacia).